The chain runs to 112 residues: T cell receptor alpha variable 17 (112 aa).

An N-terminal signal peptide occupies residues 1–21 (METLLGVSLVILWLQLARVNS). Residues 22–112 (QQGEEDPQAL…DTASYFCATD (91 aa)) form the Ig-like domain. Residues Asn38 and Asn42 are each glycosylated (N-linked (GlcNAc...) asparagine). Cysteines 43 and 109 form a disulfide.

In terms of assembly, alpha-beta TR is a heterodimer composed of an alpha and beta chain; disulfide-linked. The alpha-beta TR is associated with the transmembrane signaling CD3 coreceptor proteins to form the TR-CD3 (TcR or TCR). The assembly of alpha-beta TR heterodimers with CD3 occurs in the endoplasmic reticulum where a single alpha-beta TR heterodimer associates with one CD3D-CD3E heterodimer, one CD3G-CD3E heterodimer and one CD247 homodimer forming a stable octameric structure. CD3D-CD3E and CD3G-CD3E heterodimers preferentially associate with TR alpha and TR beta chains, respectively. The association of the CD247 homodimer is the last step of TcR assembly in the endoplasmic reticulum and is required for transport to the cell surface.

The protein localises to the cell membrane. V region of the variable domain of T cell receptor (TR) alpha chain that participates in the antigen recognition. Alpha-beta T cell receptors are antigen specific receptors which are essential to the immune response and are present on the cell surface of T lymphocytes. Recognize peptide-major histocompatibility (MH) (pMH) complexes that are displayed by antigen presenting cells (APC), a prerequisite for efficient T cell adaptive immunity against pathogens. Binding of alpha-beta TR to pMH complex initiates TR-CD3 clustering on the cell surface and intracellular activation of LCK that phosphorylates the ITAM motifs of CD3G, CD3D, CD3E and CD247 enabling the recruitment of ZAP70. In turn ZAP70 phosphorylates LAT, which recruits numerous signaling molecules to form the LAT signalosome. The LAT signalosome propagates signal branching to three major signaling pathways, the calcium, the mitogen-activated protein kinase (MAPK) kinase and the nuclear factor NF-kappa-B (NF-kB) pathways, leading to the mobilization of transcription factors that are critical for gene expression and essential for T cell growth and differentiation. The T cell repertoire is generated in the thymus, by V-(D)-J rearrangement. This repertoire is then shaped by intrathymic selection events to generate a peripheral T cell pool of self-MH restricted, non-autoaggressive T cells. Post-thymic interaction of alpha-beta TR with the pMH complexes shapes TR structural and functional avidity. The sequence is that of T cell receptor alpha variable 17 from Homo sapiens (Human).